A 239-amino-acid polypeptide reads, in one-letter code: Aspartate/glutamate leucyltransferase (239 aa).

Belongs to the R-transferase family. Bpt subfamily.

It localises to the cytoplasm. The catalysed reaction is N-terminal L-glutamyl-[protein] + L-leucyl-tRNA(Leu) = N-terminal L-leucyl-L-glutamyl-[protein] + tRNA(Leu) + H(+). The enzyme catalyses N-terminal L-aspartyl-[protein] + L-leucyl-tRNA(Leu) = N-terminal L-leucyl-L-aspartyl-[protein] + tRNA(Leu) + H(+). Functions in the N-end rule pathway of protein degradation where it conjugates Leu from its aminoacyl-tRNA to the N-termini of proteins containing an N-terminal aspartate or glutamate. The sequence is that of Aspartate/glutamate leucyltransferase from Campylobacter jejuni subsp. jejuni serotype O:23/36 (strain 81-176).